We begin with the raw amino-acid sequence, 238 residues long: Ribonuclease PH (238 aa).

Phosphate contacts are provided by residues Arg86 and 124–126 (GTR).

Belongs to the RNase PH family. Homohexameric ring arranged as a trimer of dimers.

It carries out the reaction tRNA(n+1) + phosphate = tRNA(n) + a ribonucleoside 5'-diphosphate. In terms of biological role, phosphorolytic 3'-5' exoribonuclease that plays an important role in tRNA 3'-end maturation. Removes nucleotide residues following the 3'-CCA terminus of tRNAs; can also add nucleotides to the ends of RNA molecules by using nucleoside diphosphates as substrates, but this may not be physiologically important. Probably plays a role in initiation of 16S rRNA degradation (leading to ribosome degradation) during starvation. In Agrobacterium fabrum (strain C58 / ATCC 33970) (Agrobacterium tumefaciens (strain C58)), this protein is Ribonuclease PH.